A 158-amino-acid chain; its full sequence is Snaclec coagulation factor X-activating enzyme light chain 2 (158 aa).

The first 23 residues, 1–23, serve as a signal peptide directing secretion; it reads MGRSISVSFGLLAVFLSLSGTGA. 3 disulfide bridges follow: C27–C38, C55–C152, and C127–C144. The C-type lectin domain occupies 34–153; that stretch reads YRYFCYRVFK…CEEPYPFVCK (120 aa).

Belongs to the snaclec family. As to quaternary structure, heterotrimer; disulfide-linked. The heterotrimer consists of 1 heavy chain (a metalloproteinase) and 2 light chains: LC1 and LC2. In terms of tissue distribution, expressed by the venom gland.

It is found in the secreted. In terms of biological role, regulatory subunit of the blood coagulation factor X-activating enzyme. Activates coagulation factor X (F10) by cleaving the Arg-Ile bond at position 234, activates coagulation factor IX (F9) by cleaving the Arg-Val bond at position 226 and is also able to activate protein C (PROC). May serve as an exosite by which the enzyme recognizes and binds to the Gla domain of factor X (F10) in a calcium-dependent manner. The sequence is that of Snaclec coagulation factor X-activating enzyme light chain 2 (LC2) from Macrovipera lebetinus (Levantine viper).